A 341-amino-acid polypeptide reads, in one-letter code: Arfaptin-2 (341 aa).

The disordered stretch occupies residues 46 to 85 (NETSIVSGGYGGSGDGLIPTGSGRHPSHSTTPSGPGDEVA). Serine 72 is modified (phosphoserine). Threonine 76 bears the Phosphothreonine mark. The 201-residue stretch at 121–321 (TVDLELELQI…NQKQLEQTLQ (201 aa)) folds into the AH domain.

As to quaternary structure, forms homodimers or heterodimers with ARFIP1. Interacts with RAC1. Specifically binds to GTP-bound ARF1 and ARF6, but binds to RAC1.GTP and RAC1.GDP with similar affinities. Interacts with ARL1. Interacts (via N-terminus) with IKBKB and IKBKG; these interactions inhibit activation of NF-kappa-B.

It is found in the golgi apparatus. It localises to the trans-Golgi network membrane. Functionally, plays a role in constitutive metalloproteinase (MMP) secretion from the trans Golgi network. May have important functions during vesicle biogenesis at certain cargo subdomains, which could be predominantly utilized by secreted MMPs, such as MMP7 and MMP2. Also involved in autophagy by regulating the starvation-dependent trafficking of ATG9A vesicles which deliver the phosphatidylinositol 4-kinase beta (PI4KB) to the autophagosome initiation site. Involved in phagophore growth during mitophagy by regulating ATG9A trafficking to mitochondria. In addition, plays a role in NF-kappa-B inhibition by interacting with IKBKB and IKBKG. This chain is Arfaptin-2, found in Homo sapiens (Human).